The following is a 977-amino-acid chain: 2-oxoglutarate dehydrogenase E1 component (977 aa).

One can recognise an RPE1 insert domain in the interval 77–125; sequence VLNNRHLAKPAYREEFKGDTERSTAAYIDIREDASTGSTSKLPLEAKFG.

This sequence belongs to the alpha-ketoglutarate dehydrogenase family. Homodimer. Part of the 2-oxoglutarate dehydrogenase (OGDH) complex composed of E1 (2-oxoglutarate dehydrogenase), E2 (dihydrolipoamide succinyltransferase) and E3 (dihydrolipoamide dehydrogenase); the complex contains multiple copies of the three enzymatic components (E1, E2 and E3). Requires thiamine diphosphate as cofactor.

The catalysed reaction is N(6)-[(R)-lipoyl]-L-lysyl-[protein] + 2-oxoglutarate + H(+) = N(6)-[(R)-S(8)-succinyldihydrolipoyl]-L-lysyl-[protein] + CO2. Its function is as follows. E1 component of the 2-oxoglutarate dehydrogenase (OGDH) complex which catalyzes the decarboxylation of 2-oxoglutarate, the first step in the conversion of 2-oxoglutarate to succinyl-CoA and CO(2). This chain is 2-oxoglutarate dehydrogenase E1 component (sucA), found in Rickettsia felis (strain ATCC VR-1525 / URRWXCal2) (Rickettsia azadi).